The chain runs to 183 residues: MSQPPKILLLYAHPEPQDSVANRVLLQPAQQLANVTVHDLYAHYPDFFIDIHHEQQLLREHQVIVFQHPFYTYSCPALLKEWLDRVLSRGFANGIGGNALAGKYWRSVITTGEPEDAYHPDGNNRYPMEDLLRPFELTAAMCRMHWMHPMIVYWARRLQPDVLSSQARAYGEWLASPLPEEER.

The protein belongs to the NAD(P)H dehydrogenase (quinone) family. KefG subfamily. Interacts with KefB.

It localises to the cell inner membrane. The catalysed reaction is a quinone + NADH + H(+) = a quinol + NAD(+). It catalyses the reaction a quinone + NADPH + H(+) = a quinol + NADP(+). Regulatory subunit of a potassium efflux system that confers protection against electrophiles. Required for full activity of KefB. The chain is Glutathione-regulated potassium-efflux system ancillary protein KefG from Pectobacterium carotovorum subsp. carotovorum (strain PC1).